A 391-amino-acid polypeptide reads, in one-letter code: Phosphoglycerate kinase (391 aa).

Residues 21–23 (DLN), Arg36, 59–62 (HLGR), Arg113, and Arg146 contribute to the substrate site. Residues Lys197, Glu319, and 345–348 (GGDT) each bind ATP.

It belongs to the phosphoglycerate kinase family. In terms of assembly, monomer.

The protein localises to the cytoplasm. It carries out the reaction (2R)-3-phosphoglycerate + ATP = (2R)-3-phospho-glyceroyl phosphate + ADP. Its pathway is carbohydrate degradation; glycolysis; pyruvate from D-glyceraldehyde 3-phosphate: step 2/5. In Xanthomonas euvesicatoria pv. vesicatoria (strain 85-10) (Xanthomonas campestris pv. vesicatoria), this protein is Phosphoglycerate kinase.